The chain runs to 371 residues: Tetraacyldisaccharide 4'-kinase (371 aa).

63–70 (AVGGAGKT) is a binding site for ATP.

The protein belongs to the LpxK family.

It catalyses the reaction a lipid A disaccharide + ATP = a lipid IVA + ADP + H(+). It functions in the pathway glycolipid biosynthesis; lipid IV(A) biosynthesis; lipid IV(A) from (3R)-3-hydroxytetradecanoyl-[acyl-carrier-protein] and UDP-N-acetyl-alpha-D-glucosamine: step 6/6. Transfers the gamma-phosphate of ATP to the 4'-position of a tetraacyldisaccharide 1-phosphate intermediate (termed DS-1-P) to form tetraacyldisaccharide 1,4'-bis-phosphate (lipid IVA). The chain is Tetraacyldisaccharide 4'-kinase from Anaeromyxobacter sp. (strain Fw109-5).